Here is a 249-residue protein sequence, read N- to C-terminus: 5'-nucleotidase SurE (249 aa).

Asp9, Asp10, Ser40, and Asn92 together coordinate a divalent metal cation.

Belongs to the SurE nucleotidase family. A divalent metal cation is required as a cofactor.

Its subcellular location is the cytoplasm. The enzyme catalyses a ribonucleoside 5'-phosphate + H2O = a ribonucleoside + phosphate. Nucleotidase that shows phosphatase activity on nucleoside 5'-monophosphates. This Shewanella sediminis (strain HAW-EB3) protein is 5'-nucleotidase SurE.